The primary structure comprises 2381 residues: Protein Ycf2 (2381 aa).

Residue 1655 to 1662 (GPMETGRS) coordinates ATP.

This sequence belongs to the Ycf2 family.

The protein localises to the plastid. It is found in the chloroplast stroma. In terms of biological role, probable ATPase of unknown function. Its presence in a non-photosynthetic plant (Epifagus virginiana) and experiments in tobacco indicate that it has an essential function which is probably not related to photosynthesis. In Angiopteris evecta (Mule's foot fern), this protein is Protein Ycf2.